A 199-amino-acid chain; its full sequence is Large ribosomal subunit protein bL25 (199 aa).

Residues methionine 1–glycine 21 form a disordered region.

Belongs to the bacterial ribosomal protein bL25 family. CTC subfamily. As to quaternary structure, part of the 50S ribosomal subunit; part of the 5S rRNA/L5/L18/L25 subcomplex. Contacts the 5S rRNA. Binds to the 5S rRNA independently of L5 and L18.

This is one of the proteins that binds to the 5S RNA in the ribosome where it forms part of the central protuberance. The sequence is that of Large ribosomal subunit protein bL25 from Desulfovibrio desulfuricans (strain ATCC 27774 / DSM 6949 / MB).